The chain runs to 179 residues: Large ribosomal subunit protein uL5 (179 aa).

Belongs to the universal ribosomal protein uL5 family. In terms of assembly, part of the 50S ribosomal subunit; part of the 5S rRNA/L5/L18/L25 subcomplex. Contacts the 5S rRNA and the P site tRNA. Forms a bridge to the 30S subunit in the 70S ribosome.

This is one of the proteins that bind and probably mediate the attachment of the 5S RNA into the large ribosomal subunit, where it forms part of the central protuberance. In the 70S ribosome it contacts protein S13 of the 30S subunit (bridge B1b), connecting the 2 subunits; this bridge is implicated in subunit movement. Contacts the P site tRNA; the 5S rRNA and some of its associated proteins might help stabilize positioning of ribosome-bound tRNAs. This is Large ribosomal subunit protein uL5 from Francisella tularensis subsp. mediasiatica (strain FSC147).